Reading from the N-terminus, the 78-residue chain is Acyl carrier protein (78 aa).

One can recognise a Carrier domain in the interval 2-77 (STIEERVKKI…AAIDYVNAHQ (76 aa)). The residue at position 37 (S37) is an O-(pantetheine 4'-phosphoryl)serine.

This sequence belongs to the acyl carrier protein (ACP) family. In terms of processing, 4'-phosphopantetheine is transferred from CoA to a specific serine of apo-ACP by AcpS. This modification is essential for activity because fatty acids are bound in thioester linkage to the sulfhydryl of the prosthetic group.

The protein localises to the cytoplasm. It participates in lipid metabolism; fatty acid biosynthesis. Functionally, carrier of the growing fatty acid chain in fatty acid biosynthesis. The sequence is that of Acyl carrier protein from Pseudomonas entomophila (strain L48).